Here is a 1209-residue protein sequence, read N- to C-terminus: Pre-mRNA-splicing factor rse1 (1209 aa).

Belongs to the RSE1 family. In terms of assembly, associated with the spliceosome.

The protein resides in the nucleus. Functionally, involved in pre-mRNA splicing and cell cycle control. This chain is Pre-mRNA-splicing factor rse1 (msp-5), found in Neurospora crassa (strain ATCC 24698 / 74-OR23-1A / CBS 708.71 / DSM 1257 / FGSC 987).